We begin with the raw amino-acid sequence, 476 residues long: ATP synthase subunit beta (476 aa).

152-159 (GGAGVGKT) provides a ligand contact to ATP.

The protein belongs to the ATPase alpha/beta chains family. In terms of assembly, F-type ATPases have 2 components, CF(1) - the catalytic core - and CF(0) - the membrane proton channel. CF(1) has five subunits: alpha(3), beta(3), gamma(1), delta(1), epsilon(1). CF(0) has three main subunits: a(1), b(2) and c(9-12). The alpha and beta chains form an alternating ring which encloses part of the gamma chain. CF(1) is attached to CF(0) by a central stalk formed by the gamma and epsilon chains, while a peripheral stalk is formed by the delta and b chains.

The protein localises to the cell inner membrane. The enzyme catalyses ATP + H2O + 4 H(+)(in) = ADP + phosphate + 5 H(+)(out). In terms of biological role, produces ATP from ADP in the presence of a proton gradient across the membrane. The catalytic sites are hosted primarily by the beta subunits. This Granulibacter bethesdensis (strain ATCC BAA-1260 / CGDNIH1) protein is ATP synthase subunit beta.